The sequence spans 108 residues: Thioredoxin Asp f 28 (108 aa).

The Thioredoxin domain occupies 1–108; sequence MSHGKVIAVD…LEEMIKSISA (108 aa). Catalysis depends on nucleophile residues cysteine 33 and cysteine 36. A disulfide bridge links cysteine 33 with cysteine 36.

Belongs to the thioredoxin family.

Its function is as follows. Participates in various redox reactions through the reversible oxidation of its active center dithiol to a disulfide and catalyzes dithiol-disulfide exchange reactions. This Aspergillus fumigatus (Neosartorya fumigata) protein is Thioredoxin Asp f 28.